Consider the following 494-residue polypeptide: Probable malate:quinone oxidoreductase (494 aa).

The protein belongs to the MQO family. FAD serves as cofactor.

It carries out the reaction (S)-malate + a quinone = a quinol + oxaloacetate. It participates in carbohydrate metabolism; tricarboxylic acid cycle; oxaloacetate from (S)-malate (quinone route): step 1/1. The sequence is that of Probable malate:quinone oxidoreductase from Micrococcus luteus (strain ATCC 4698 / DSM 20030 / JCM 1464 / CCM 169 / CCUG 5858 / IAM 1056 / NBRC 3333 / NCIMB 9278 / NCTC 2665 / VKM Ac-2230) (Micrococcus lysodeikticus).